The sequence spans 428 residues: Glutamate-1-semialdehyde 2,1-aminomutase 1 (428 aa).

Residue lysine 268 is modified to N6-(pyridoxal phosphate)lysine.

It belongs to the class-III pyridoxal-phosphate-dependent aminotransferase family. HemL subfamily. In terms of assembly, homodimer. Pyridoxal 5'-phosphate serves as cofactor.

The protein resides in the cytoplasm. The enzyme catalyses (S)-4-amino-5-oxopentanoate = 5-aminolevulinate. It functions in the pathway porphyrin-containing compound metabolism; protoporphyrin-IX biosynthesis; 5-aminolevulinate from L-glutamyl-tRNA(Glu): step 2/2. The polypeptide is Glutamate-1-semialdehyde 2,1-aminomutase 1 (Geobacillus thermodenitrificans (strain NG80-2)).